The primary structure comprises 278 residues: Protein EXORDIUM-like 4 (278 aa).

The signal sequence occupies residues 1 to 23 (MAYNYRFAILLVLLSATVGFTAA). Residue N35 is glycosylated (N-linked (GlcNAc...) asparagine).

Belongs to the EXORDIUM family.

The protein localises to the secreted. The protein resides in the extracellular space. It is found in the apoplast. Its function is as follows. May play a role in a brassinosteroid-dependent regulation of growth and development. The polypeptide is Protein EXORDIUM-like 4 (EXL4) (Arabidopsis thaliana (Mouse-ear cress)).